The sequence spans 134 residues: MRSSSPSTGHSTQVPIKVQHRIAKKTTRRRRVDLPCGCSYFVALGCHNHGFTHRGTTHCSSIREWRVYLDGQKSPVFQDNQTPRETISEEPRHNHNTSPIQLQPEESVGDTQMFSNLPNLDSFTSSDLAFLKSI.

The short motif at 17 to 31 (KVQHRIAKKTTRRRR) is the Nuclear localization signal element. A zinc finger spans residues 36–53 (CGCSYFVALGCHNHGFTH). Positions 73-103 (KSPVFQDNQTPRETISEEPRHNHNTSPIQLQ) are disordered. Residues 75–85 (PVFQDNQTPRE) are compositionally biased toward polar residues. Positions 119–134 (NLDSFTSSDLAFLKSI) are transactivation.

This sequence belongs to the geminiviridae transcriptional activator protein family. In terms of assembly, monomer. Homodimer. Homooligomer. Self-interaction correlates with nuclear localization and efficient activation of transcription. Monomers suppress local silencing by interacting with and inactivating host adenosine kinase 2 (ADK2) in the cytoplasm. Interacts with and inhibits host SNF1 kinase. Binds to ssDNA. May interact with host RPS27A. In terms of processing, phosphorylated.

The protein localises to the host nucleus. The protein resides in the host cytoplasm. Multifunctional protein that modulates host antiviral defenses and promotes host attractiveness to insect vectors. Acts as a suppressor of RNA-mediated gene silencing, also known as post-transcriptional gene silencing (PTGS), a mechanism of plant viral defense that limits the accumulation of viral RNAs. TrAP suppresses the host RNA silencing by inhibiting adenosine kinase 2 (ADK2), a kinase involved in a general methylation pathway. Also suppresses the host basal defense by interacting with and inhibiting SNF1 kinase, a key regulator of cell metabolism implicated in innate antiviral defense. In terms of biological role, inhibits signal transduction by the phytohormone jasmonate, making the infected plant more attractive to aphids, which are the second host to play a role as a dissemination vector. Acts by binding to ubiquitin precursor RPS27A, thereby preventing ubiquitin degradation of JAZ. This Tomato yellow leaf curl China virus (TYLCCNV) protein is Transcriptional activator protein.